The chain runs to 178 residues: ATP synthase subunit delta (178 aa).

It belongs to the ATPase delta chain family. In terms of assembly, F-type ATPases have 2 components, F(1) - the catalytic core - and F(0) - the membrane proton channel. F(1) has five subunits: alpha(3), beta(3), gamma(1), delta(1), epsilon(1). F(0) has three main subunits: a(1), b(2) and c(10-14). The alpha and beta chains form an alternating ring which encloses part of the gamma chain. F(1) is attached to F(0) by a central stalk formed by the gamma and epsilon chains, while a peripheral stalk is formed by the delta and b chains.

The protein localises to the cell inner membrane. In terms of biological role, f(1)F(0) ATP synthase produces ATP from ADP in the presence of a proton or sodium gradient. F-type ATPases consist of two structural domains, F(1) containing the extramembraneous catalytic core and F(0) containing the membrane proton channel, linked together by a central stalk and a peripheral stalk. During catalysis, ATP synthesis in the catalytic domain of F(1) is coupled via a rotary mechanism of the central stalk subunits to proton translocation. This protein is part of the stalk that links CF(0) to CF(1). It either transmits conformational changes from CF(0) to CF(1) or is implicated in proton conduction. This chain is ATP synthase subunit delta, found in Pseudomonas putida (strain W619).